The sequence spans 274 residues: MQTWRLLHTGKGSAAFNMAVDEAVMIAHSRGEVPPTLRLYGWDPPTLSIGYFQRAGKEVDFEALSARGYGFVRRPTGGRAVLHDREVTYSVVVSESYPGMPGSVTESYRVISEGLVRGLRKLGFDAHFARPDEEGRQRLAAPSSAACFDSPSWYEVVVEGKKLVGSAQTRQRGVILQHGSILLDLDPEALFAVLRFPSDRVRDRLRRTFEEHAVSLRDLAGAPVSAERVEEALAEGFAEALGARLEPGELTAEERETAEQLMAKYLADEWNYRK.

Positions 31–245 (GEVPPTLRLY…GFAEALGARL (215 aa)) constitute a BPL/LPL catalytic domain. Residue Cys-147 is the Acyl-thioester intermediate of the active site.

It belongs to the octanoyltransferase LipM family. Monomer.

It carries out the reaction octanoyl-[ACP] + L-lysyl-[protein] = N(6)-octanoyl-L-lysyl-[protein] + holo-[ACP] + H(+). It participates in protein modification; protein lipoylation via endogenous pathway; protein N(6)-(lipoyl)lysine from octanoyl-[acyl-carrier-protein]. Catalyzes the transfer of endogenously produced octanoic acid from octanoyl-acyl-carrier-protein onto the lipoyl domain of GcvH, an intermediate carrier during protein lipoylation. This chain is Octanoyltransferase LipM, found in Kyrpidia tusciae (strain DSM 2912 / NBRC 15312 / T2) (Bacillus tusciae).